Consider the following 193-residue polypeptide: MTEYLLLLVSTVLINNFVLVKFLGLCPFMGVSGKLETAVGMGLATTFVMTLASASSYLMEHYILIPLNIAYLRTLAFILVIAVVVQFTEMVIRKSSPTLYRLLGIFLPLITTNCAVLGVALLSINERHNFIQSIIYGFGAAAGFSLVLILFAAMRERLVAADVPTPFRGVSIAMVTAGLMSLAFMGFTGLIKI.

6 consecutive transmembrane segments (helical) span residues 5–25 (LLLL…FLGL), 39–59 (VGMG…SYLM), 63–83 (ILIP…VIAV), 102–122 (LLGI…VALL), 134–154 (IIYG…FAAM), and 171–191 (SIAM…TGLI).

It belongs to the NqrDE/RnfAE family. The complex is composed of six subunits: RnfA, RnfB, RnfC, RnfD, RnfE and RnfG.

Its subcellular location is the cell inner membrane. Functionally, part of a membrane-bound complex that couples electron transfer with translocation of ions across the membrane. This is Ion-translocating oxidoreductase complex subunit A from Aeromonas salmonicida (strain A449).